Here is a 180-residue protein sequence, read N- to C-terminus: ATP-dependent protease subunit HslV (180 aa).

Threonine 7 is a catalytic residue. Na(+) is bound by residues glycine 165, cysteine 168, and threonine 171.

It belongs to the peptidase T1B family. HslV subfamily. A double ring-shaped homohexamer of HslV is capped on each side by a ring-shaped HslU homohexamer. The assembly of the HslU/HslV complex is dependent on binding of ATP.

It localises to the cytoplasm. The catalysed reaction is ATP-dependent cleavage of peptide bonds with broad specificity.. Its activity is regulated as follows. Allosterically activated by HslU binding. Functionally, protease subunit of a proteasome-like degradation complex believed to be a general protein degrading machinery. This chain is ATP-dependent protease subunit HslV, found in Bacillus cereus (strain G9842).